Reading from the N-terminus, the 224-residue chain is Octanoyltransferase (224 aa).

The region spanning 38–213 (AETTDEVWLL…QFVRAAGFQS (176 aa)) is the BPL/LPL catalytic domain. Substrate contacts are provided by residues 77-84 (RGGQVTYH), 144-146 (SLG), and 157-159 (GLA). Cys-175 functions as the Acyl-thioester intermediate in the catalytic mechanism.

Belongs to the LipB family.

It is found in the cytoplasm. The enzyme catalyses octanoyl-[ACP] + L-lysyl-[protein] = N(6)-octanoyl-L-lysyl-[protein] + holo-[ACP] + H(+). The protein operates within protein modification; protein lipoylation via endogenous pathway; protein N(6)-(lipoyl)lysine from octanoyl-[acyl-carrier-protein]: step 1/2. In terms of biological role, catalyzes the transfer of endogenously produced octanoic acid from octanoyl-acyl-carrier-protein onto the lipoyl domains of lipoate-dependent enzymes. Lipoyl-ACP can also act as a substrate although octanoyl-ACP is likely to be the physiological substrate. This Hahella chejuensis (strain KCTC 2396) protein is Octanoyltransferase.